Reading from the N-terminus, the 144-residue chain is Large ribosomal subunit protein uL15 (144 aa).

The disordered stretch occupies residues 1–53 (MRLNTLSPAEGSKHASKRLGRGIGSGLGKTGGRGHKGQKSRSGGGVRRGFEGG). The span at 21–31 (RGIGSGLGKTG) shows a compositional bias: gly residues.

Belongs to the universal ribosomal protein uL15 family. Part of the 50S ribosomal subunit.

In terms of biological role, binds to the 23S rRNA. The chain is Large ribosomal subunit protein uL15 from Edwardsiella ictaluri (strain 93-146).